The primary structure comprises 158 residues: Tryptophan-rich protein TspO (158 aa).

5 consecutive transmembrane segments (helical) span residues 5 to 25, 48 to 68, 79 to 99, 105 to 125, and 134 to 154; these read ILTL…GSTF, LFPP…AKVL, VGVV…ASFF, LAGL…MLAF, and LLLV…FTIL.

This sequence belongs to the TspO/BZRP family.

It is found in the membrane. The protein localises to the cell membrane. Binds tetrapyrroles and promotes the photooxidative degradation of protoporphyrin IX. Can bind the benzodiazepine receptor agonist PK-11195 (in vitro); this interferes with photooxidative tetrapyrrole degradation. May play a role in the transmembrane transport of tetrapyrroles and similar compounds. The polypeptide is Tryptophan-rich protein TspO (Chlorobaculum tepidum (strain ATCC 49652 / DSM 12025 / NBRC 103806 / TLS) (Chlorobium tepidum)).